Here is a 242-residue protein sequence, read N- to C-terminus: Type III pantothenate kinase (242 aa).

5-12 (DLGNTRLK) serves as a coordination point for ATP. Residues Tyr-94 and 100 to 103 (GCDR) each bind substrate. Asp-102 (proton acceptor) is an active-site residue. Thr-124 contributes to the ATP binding site. Thr-175 contacts substrate.

This sequence belongs to the type III pantothenate kinase family. Homodimer. It depends on NH4(+) as a cofactor. Requires K(+) as cofactor.

The protein localises to the cytoplasm. It catalyses the reaction (R)-pantothenate + ATP = (R)-4'-phosphopantothenate + ADP + H(+). The protein operates within cofactor biosynthesis; coenzyme A biosynthesis; CoA from (R)-pantothenate: step 1/5. Its function is as follows. Catalyzes the phosphorylation of pantothenate (Pan), the first step in CoA biosynthesis. This Psychrobacter cryohalolentis (strain ATCC BAA-1226 / DSM 17306 / VKM B-2378 / K5) protein is Type III pantothenate kinase.